Reading from the N-terminus, the 256-residue chain is Ras-related protein Rab-26 (256 aa).

Positions 1–51 (MSRKKTPKSKGASTPAASTLPTANGARPARSGTALSGPDAPPNGPLQPGRP) are disordered. The segment covering 12–23 (ASTPAASTLPTA) has biased composition (low complexity). GTP-binding residues include Ser72, Gly73, Val74, Gly75, Lys76, Thr77, Cys78, Ser95, and Thr96. Thr77 contacts Mg(2+). Short sequence motifs (switch) lie at residues 86–101 (GAFL…GIDF) and 119–136 (DTAG…YYRD). Mg(2+) is bound by residues Thr96 and Asp119. 6 residues coordinate GTP: Gly122, Asn177, Lys178, Asp180, Ala208, and Lys209. 2 S-geranylgeranyl cysteine lipidation sites follow: Cys253 and Cys254.

The protein belongs to the small GTPase superfamily. Rab family. As to quaternary structure, interacts with RIMS1. Interacts with ADRA2B. The cofactor is Mg(2+). Predominantly expressed in brain.

It localises to the golgi apparatus membrane. Its subcellular location is the cytoplasmic vesicle. The protein localises to the secretory vesicle membrane. The enzyme catalyses GTP + H2O = GDP + phosphate + H(+). Regulated by guanine nucleotide exchange factors (GEFs) which promote the exchange of bound GDP for free GTP. Regulated by GTPase activating proteins (GAPs) which increase the GTP hydrolysis activity. Inhibited by GDP dissociation inhibitors (GDIs). Its function is as follows. The small GTPases Rab are key regulators of intracellular membrane trafficking, from the formation of transport vesicles to their fusion with membranes. Rabs cycle between an inactive GDP-bound form and an active GTP-bound form that is able to recruit to membranes different set of downstream effectors directly responsible for vesicle formation, movement, tethering and fusion. RAB26 mediates transport of ADRA2A and ADRA2B from the Golgi to the cell membrane. Plays a role in the maturation of zymogenic granules and in pepsinogen secretion in the stomach. Plays a role in the secretion of amylase from acinar granules in the parotid gland. This is Ras-related protein Rab-26 from Homo sapiens (Human).